The chain runs to 260 residues: Small ribosomal subunit protein uS2 (260 aa).

The protein belongs to the universal ribosomal protein uS2 family.

This is Small ribosomal subunit protein uS2 (rpsB) from Borreliella burgdorferi (strain ATCC 35210 / DSM 4680 / CIP 102532 / B31) (Borrelia burgdorferi).